Reading from the N-terminus, the 576-residue chain is Chaperonin CPN60-2, mitochondrial (576 aa).

Residues 1–34 (MYRAAASLASKARQAGSSSAARQVGSRLAWSRNY) constitute a mitochondrion transit peptide.

Belongs to the chaperonin (HSP60) family.

It localises to the mitochondrion. In terms of biological role, implicated in mitochondrial protein import and macromolecular assembly. May facilitate the correct folding of imported proteins. May also prevent misfolding and promote the refolding and proper assembly of unfolded polypeptides generated under stress conditions in the mitochondrial matrix. This is Chaperonin CPN60-2, mitochondrial (CPN60II) from Zea mays (Maize).